Reading from the N-terminus, the 795-residue chain is Volume-regulated anion channel subunit LRRC8E (795 aa).

Over 1 to 22 (MIPVAEFKQFTEQQPAFKVLKP) the chain is Cytoplasmic. The helical transmembrane segment at 23–43 (WWDVLAEYLTVAMLMIGVFGC) threads the bilayer. At 44 to 116 (TLQVTQDKII…YETALHWYAK (73 aa)) the chain is on the extracellular side. C54 and C300 are disulfide-bonded. Residue N63 is glycosylated (N-linked (GlcNAc...) asparagine). Residues 117-137 (YFPYLVVIHTLIFMVCTSFWF) form a helical membrane-spanning segment. The Cytoplasmic segment spans residues 138 to 264 (KFPGTSSKIE…IRQTVLKVCK (127 aa)). Residues 265–285 (FFAILVYNLIYVEKISFLVAC) traverse the membrane as a helical segment. At 286–312 (RVETSEITGYASFCCNHTKAHLFSKLA) the chain is on the extracellular side. N301 carries an N-linked (GlcNAc...) asparagine glycan. A helical membrane pass occupies residues 313 to 333 (FCYISFVCVYGITCLYTLYWL). The Cytoplasmic portion of the chain corresponds to 334–795 (FHRPLKEYSF…AEVREKMEEE (462 aa)). LRR repeat units lie at residues 535 to 556 (QLKVLSLRSNAGKVPASVTDVA), 558 to 578 (HLQRLSLHNDGARLLALNSLK), 582 to 603 (VLRELELVACGLERIPHAIFSL), 605 to 626 (ALQELDLKDNHLRSIEEILSFQ), 630 to 651 (KLVTLRLWHNQIAYVPEHVRKL), 653 to 674 (SLEQLYLSHNKLETLPTQLGQC), 676 to 697 (GLRLLDLSHNGLRSLPPELGLL), 699 to 720 (SLQHLALSYNALESLPDELFFC), 722 to 744 (KLRTLLLGYNHLTQLSPDVAALQ), and 745 to 766 (ALSRLELKGNRLETLPEELGDC).

The protein belongs to the LRRC8 family. In terms of assembly, heterohexamer; oligomerizes with other LRRC8 proteins (LRRC8A, LRRC8C, LRRC8D and/or LRRC8B) to form a heterohexamer. In vivo, the subunit composition may depend primarily on expression levels, and heterooligomeric channels containing various proportions of the different LRRC8 proteins may coexist.

The protein resides in the cell membrane. It is found in the endoplasmic reticulum membrane. Its subcellular location is the lysosome membrane. The catalysed reaction is chloride(in) = chloride(out). It catalyses the reaction iodide(out) = iodide(in). It carries out the reaction taurine(out) = taurine(in). The enzyme catalyses 2',3'-cGAMP(out) = 2',3'-cGAMP(in). Functionally, non-essential component of the volume-regulated anion channel (VRAC, also named VSOAC channel), an anion channel required to maintain a constant cell volume in response to extracellular or intracellular osmotic changes. The VRAC channel conducts iodide better than chloride and can also conduct organic osmolytes like taurine. Mediates efflux of amino acids, such as aspartate, in response to osmotic stress. The VRAC channel also mediates transport of immunoreactive cyclic dinucleotide GMP-AMP (2'-3'-cGAMP), an immune messenger produced in response to DNA virus in the cytosol. Channel activity requires LRRC8A plus at least one other family member (LRRC8B, LRRC8C, LRRC8D or LRRC8E); channel characteristics depend on the precise subunit composition. Also plays a role in lysosome homeostasis by forming functional lysosomal VRAC channels in response to low cytoplasmic ionic strength condition: lysosomal VRAC channels are necessary for the formation of large lysosome-derived vacuoles, which store and then expel excess water to maintain cytosolic water homeostasis. This Mus musculus (Mouse) protein is Volume-regulated anion channel subunit LRRC8E.